We begin with the raw amino-acid sequence, 389 residues long: Succinate--CoA ligase [ADP-forming] subunit beta (389 aa).

One can recognise an ATP-grasp domain in the interval 9–246; the sequence is KEILRRHNAN…ITEEDPYEVK (238 aa). Residues lysine 48, 55 to 57, glutamate 101, leucine 104, and glutamate 109 each bind ATP; that span reads GRG. Mg(2+)-binding residues include asparagine 201 and aspartate 215. Residues asparagine 266 and 323–325 contribute to the substrate site; that span reads GIV.

Belongs to the succinate/malate CoA ligase beta subunit family. Heterotetramer of two alpha and two beta subunits. Mg(2+) serves as cofactor.

The enzyme catalyses succinate + ATP + CoA = succinyl-CoA + ADP + phosphate. The catalysed reaction is GTP + succinate + CoA = succinyl-CoA + GDP + phosphate. It functions in the pathway carbohydrate metabolism; tricarboxylic acid cycle; succinate from succinyl-CoA (ligase route): step 1/1. Its function is as follows. Succinyl-CoA synthetase functions in the citric acid cycle (TCA), coupling the hydrolysis of succinyl-CoA to the synthesis of either ATP or GTP and thus represents the only step of substrate-level phosphorylation in the TCA. The beta subunit provides nucleotide specificity of the enzyme and binds the substrate succinate, while the binding sites for coenzyme A and phosphate are found in the alpha subunit. This Leptospira biflexa serovar Patoc (strain Patoc 1 / Ames) protein is Succinate--CoA ligase [ADP-forming] subunit beta.